A 467-amino-acid polypeptide reads, in one-letter code: Fumarate hydratase class II (467 aa).

Substrate-binding positions include 98–100, R126, 129–132, 139–141, and T187; these read SGT, HPND, and SSN. The Proton donor/acceptor role is filled by H188. The active site involves S318. Substrate contacts are provided by residues S319 and 324–326; that span reads KVN.

It belongs to the class-II fumarase/aspartase family. Fumarase subfamily. In terms of assembly, homotetramer.

The protein resides in the cytoplasm. The enzyme catalyses (S)-malate = fumarate + H2O. It functions in the pathway carbohydrate metabolism; tricarboxylic acid cycle; (S)-malate from fumarate: step 1/1. In terms of biological role, involved in the TCA cycle. Catalyzes the stereospecific interconversion of fumarate to L-malate. This Salmonella typhimurium (strain LT2 / SGSC1412 / ATCC 700720) protein is Fumarate hydratase class II.